Here is a 365-residue protein sequence, read N- to C-terminus: Glutamate 5-kinase 1 (365 aa).

Residue lysine 9 coordinates ATP. Serine 49, aspartate 136, and asparagine 148 together coordinate substrate. ATP contacts are provided by residues threonine 168–aspartate 169 and threonine 210–lysine 216. A PUA domain is found at serine 276–glutamate 353.

Belongs to the glutamate 5-kinase family.

It localises to the cytoplasm. The catalysed reaction is L-glutamate + ATP = L-glutamyl 5-phosphate + ADP. It functions in the pathway amino-acid biosynthesis; L-proline biosynthesis; L-glutamate 5-semialdehyde from L-glutamate: step 1/2. Its function is as follows. Catalyzes the transfer of a phosphate group to glutamate to form L-glutamate 5-phosphate. This is Glutamate 5-kinase 1 from Bacillus licheniformis (strain ATCC 14580 / DSM 13 / JCM 2505 / CCUG 7422 / NBRC 12200 / NCIMB 9375 / NCTC 10341 / NRRL NRS-1264 / Gibson 46).